The following is an 85-amino-acid chain: Small ribosomal subunit protein uS15 (85 aa).

This sequence belongs to the universal ribosomal protein uS15 family. In terms of assembly, part of the 30S ribosomal subunit. Forms a bridge to the 50S subunit in the 70S ribosome, contacting the 23S rRNA.

Its function is as follows. One of the primary rRNA binding proteins, it binds directly to 16S rRNA where it helps nucleate assembly of the platform of the 30S subunit by binding and bridging several RNA helices of the 16S rRNA. In terms of biological role, forms an intersubunit bridge (bridge B4) with the 23S rRNA of the 50S subunit in the ribosome. This is Small ribosomal subunit protein uS15 from Fusobacterium nucleatum subsp. nucleatum (strain ATCC 25586 / DSM 15643 / BCRC 10681 / CIP 101130 / JCM 8532 / KCTC 2640 / LMG 13131 / VPI 4355).